The sequence spans 344 residues: uncharacterized protein (344 aa).

The disordered stretch occupies residues 95 to 344 (TINPEDANED…TPAKKNSKGR (250 aa)). Over residues 103–123 (EDAKVKNSLKLEKEEGSDEKS) the composition is skewed to basic and acidic residues. Residues 135–155 (SDDESDNSNDSEESEAEDSDQ) are compositionally biased toward acidic residues. The span at 191-200 (SAKNAKASKP) shows a compositional bias: low complexity. Over residues 244–259 (SEDEDSGSDNSEEESE) the composition is skewed to acidic residues. Residues 265-276 (ASSKKPPSKSSK) show a composition bias toward basic residues. Residues 281 to 314 (EDEDEDSGQSESEHSEEESNSDEDSGQSEEESEE) are compositionally biased toward acidic residues. Over residues 331-344 (TAKKTPAKKNSKGR) the composition is skewed to basic residues.

This is an uncharacterized protein from Acanthamoeba polyphaga (Amoeba).